Consider the following 458-residue polypeptide: BTB/POZ domain-containing protein At5g41330 (458 aa).

Positions 11-72 (NVVSINVGGR…LRTGNLPARS (62 aa)) constitute a BTB domain. WD repeat units follow at residues 259–305 (DSAI…MVWE), 360–399 (LNER…LVGN), and 421–458 (SGEN…GISI).

The protein operates within protein modification; protein ubiquitination. In terms of biological role, may act as a substrate-specific adapter of an E3 ubiquitin-protein ligase complex (CUL3-RBX1-BTB) which mediates the ubiquitination and subsequent proteasomal degradation of target proteins. The protein is BTB/POZ domain-containing protein At5g41330 of Arabidopsis thaliana (Mouse-ear cress).